A 327-amino-acid chain; its full sequence is tRNA N6-adenosine threonylcarbamoyltransferase (327 aa).

Residues histidine 109 and histidine 113 each coordinate Fe cation. Substrate is bound by residues 132 to 136, aspartate 165, glycine 178, aspartate 182, and asparagine 268; that span reads MVSGG. Residue aspartate 296 coordinates Fe cation.

The protein belongs to the KAE1 / TsaD family. Requires Fe(2+) as cofactor.

It localises to the cytoplasm. It catalyses the reaction L-threonylcarbamoyladenylate + adenosine(37) in tRNA = N(6)-L-threonylcarbamoyladenosine(37) in tRNA + AMP + H(+). Its function is as follows. Required for the formation of a threonylcarbamoyl group on adenosine at position 37 (t(6)A37) in tRNAs that read codons beginning with adenine. Is involved in the transfer of the threonylcarbamoyl moiety of threonylcarbamoyl-AMP (TC-AMP) to the N6 group of A37, together with TsaE and TsaB. TsaD likely plays a direct catalytic role in this reaction. This chain is tRNA N6-adenosine threonylcarbamoyltransferase, found in Thermotoga neapolitana (strain ATCC 49049 / DSM 4359 / NBRC 107923 / NS-E).